The sequence spans 418 residues: Tyrosine--tRNA ligase (418 aa).

Position 34 (tyrosine 34) interacts with L-tyrosine. Residues 39–48 (PTADSLHLGH) carry the 'HIGH' region motif. The L-tyrosine site is built by tyrosine 169 and glutamine 173. Residues 229–233 (KFGKS) carry the 'KMSKS' region motif. Lysine 232 is an ATP binding site. Positions 352 to 418 (HNIVELLVTA…GKKKYFVLTY (67 aa)) constitute an S4 RNA-binding domain.

It belongs to the class-I aminoacyl-tRNA synthetase family. TyrS type 1 subfamily. Homodimer.

It localises to the cytoplasm. It carries out the reaction tRNA(Tyr) + L-tyrosine + ATP = L-tyrosyl-tRNA(Tyr) + AMP + diphosphate + H(+). In terms of biological role, catalyzes the attachment of tyrosine to tRNA(Tyr) in a two-step reaction: tyrosine is first activated by ATP to form Tyr-AMP and then transferred to the acceptor end of tRNA(Tyr). This Streptococcus mutans serotype c (strain ATCC 700610 / UA159) protein is Tyrosine--tRNA ligase.